A 301-amino-acid polypeptide reads, in one-letter code: Bifunctional protein FolD (301 aa).

NADP(+)-binding positions include 164–166, S191, and I232; that span reads GRS.

This sequence belongs to the tetrahydrofolate dehydrogenase/cyclohydrolase family. Homodimer.

The enzyme catalyses (6R)-5,10-methylene-5,6,7,8-tetrahydrofolate + NADP(+) = (6R)-5,10-methenyltetrahydrofolate + NADPH. It catalyses the reaction (6R)-5,10-methenyltetrahydrofolate + H2O = (6R)-10-formyltetrahydrofolate + H(+). The protein operates within one-carbon metabolism; tetrahydrofolate interconversion. In terms of biological role, catalyzes the oxidation of 5,10-methylenetetrahydrofolate to 5,10-methenyltetrahydrofolate and then the hydrolysis of 5,10-methenyltetrahydrofolate to 10-formyltetrahydrofolate. The sequence is that of Bifunctional protein FolD from Borreliella afzelii (strain PKo) (Borrelia afzelii).